The sequence spans 460 residues: Probable protein phosphatase 2C 38 (460 aa).

Disordered regions lie at residues 1-30 (MVAV…AVPS) and 83-111 (RPMR…GRIA). Over residues 100–109 (PRDREPRDGR) the composition is skewed to basic and acidic residues. One can recognise a PPM-type phosphatase domain in the interval 118–432 (AASLYTMRGN…DDCAVVCLFL (315 aa)). 2 residues coordinate Mn(2+): Asp154 and Gly155. The segment at 192–219 (VTSSMTEGGGTERMDRDTETPLGTEENG) is disordered. Positions 201-210 (GTERMDRDTE) are enriched in basic and acidic residues. Mn(2+) is bound by residues Asp377 and Asp423.

It belongs to the PP2C family. Mg(2+) is required as a cofactor. The cofactor is Mn(2+).

The enzyme catalyses O-phospho-L-seryl-[protein] + H2O = L-seryl-[protein] + phosphate. The catalysed reaction is O-phospho-L-threonyl-[protein] + H2O = L-threonyl-[protein] + phosphate. This is Probable protein phosphatase 2C 38 from Oryza sativa subsp. japonica (Rice).